The chain runs to 563 residues: Methylcrotonoyl-CoA carboxylase beta chain, mitochondrial (563 aa).

The N-terminal 22 residues, 1-22 (MWGALRSALRPCCRAAVPPQRA), are a transit peptide targeting the mitochondrion. The CoA carboxyltransferase N-terminal domain occupies 49–306 (MKALVSQLHE…QKKMDVTIEP (258 aa)). The segment at 49 to 555 (MKALVSQLHE…SAALNAPIQR (507 aa)) is carboxyltransferase. An N6-acetyllysine; alternate modification is found at Lys70. Lys70 is subject to N6-succinyllysine; alternate. At Lys141 the chain carries N6-succinyllysine. The region spanning 309–555 (EPLFPADELY…SAALNAPIQR (247 aa)) is the CoA carboxyltransferase C-terminal domain. The tract at residues 343–372 (RFNEFKALYGDTLVTGFARIFGYPVGIIGN) is acyl-CoA binding. Lys433 is subject to N6-succinyllysine. Lys495 carries the N6-acetyllysine; alternate modification. Lys495 carries the post-translational modification N6-succinyllysine; alternate. An N6-acetyllysine modification is found at Lys511.

This sequence belongs to the AccD/PCCB family. As to quaternary structure, probably a dodecamer composed of six biotin-containing alpha subunits (MCCC1) and six beta (MCCC2) subunits.

It localises to the mitochondrion matrix. It catalyses the reaction 3-methylbut-2-enoyl-CoA + hydrogencarbonate + ATP = 3-methyl-(2E)-glutaconyl-CoA + ADP + phosphate + H(+). It functions in the pathway amino-acid degradation; L-leucine degradation; (S)-3-hydroxy-3-methylglutaryl-CoA from 3-isovaleryl-CoA: step 2/3. Carboxyltransferase subunit of the 3-methylcrotonyl-CoA carboxylase, an enzyme that catalyzes the conversion of 3-methylcrotonyl-CoA to 3-methylglutaconyl-CoA, a critical step for leucine and isovaleric acid catabolism. In Mus musculus (Mouse), this protein is Methylcrotonoyl-CoA carboxylase beta chain, mitochondrial (Mccc2).